We begin with the raw amino-acid sequence, 921 residues long: Ubiquitin carboxyl-terminal hydrolase 11 (921 aa).

Residues 1-16 (MAAVAADPAAAAVPAS) are compositionally biased toward low complexity. Residues 1–29 (MAAVAADPAAAAVPASAEDRETQPEAMPD) are disordered. The 106-residue stretch at 28 to 133 (PDLDQQWRQI…DQPPIERKVI (106 aa)) folds into the DUSP domain. N6-acetyllysine is present on K194. The region spanning 257 to 889 (CGLTNLGNTC…AAYVLFYQRQ (633 aa)) is the USP domain. The active-site Nucleophile is the C266. A disordered region spans residues 592–697 (TKPTSDDDDG…DRTTSPEEAQ (106 aa)). Residue S596 is modified to Phosphoserine. Residues 597–624 (DDDDGDEKGDENEDEDVEDDSSSEEEKE) are compositionally biased toward acidic residues. Composition is skewed to polar residues over residues 657–666 (LDNSLHTSQW) and 676–697 (FTLQ…EEAQ). The residue at position 692 (S692) is a Phosphoserine. Catalysis depends on H847, which acts as the Proton acceptor. The tract at residues 893-921 (RRQSQTASSETPTSPASSSTPNSDIMDVN) is disordered. The segment covering 895–915 (QSQTASSETPTSPASSSTPNS) has biased composition (low complexity). Position 906 is a phosphoserine (S906).

The protein belongs to the peptidase C19 family. Monomer. Associated component of the Polycomb group (PcG) multiprotein PRC1-like complex. Interacts with RANBP9/RANBPM. Interacts with BRCA2. Interacts with CHUK/IKKA. Interacts with NFKBIA. Interacts with SPRY3, RAE1, MYCBP2/PAM, and KCTD6.

The protein localises to the nucleus. It is found in the cytoplasm. The protein resides in the chromosome. It catalyses the reaction Thiol-dependent hydrolysis of ester, thioester, amide, peptide and isopeptide bonds formed by the C-terminal Gly of ubiquitin (a 76-residue protein attached to proteins as an intracellular targeting signal).. Its function is as follows. Protease that can remove conjugated ubiquitin from target proteins and polyubiquitin chains. Inhibits the degradation of target proteins by the proteasome. Cleaves preferentially 'Lys-6' and 'Lys-63'-linked ubiquitin chains. Has lower activity with 'Lys-11' and 'Lys-33'-linked ubiquitin chains, and extremely low activity with 'Lys-27', 'Lys-29' and 'Lys-48'-linked ubiquitin chains (in vitro). Plays a role in the regulation of pathways leading to NF-kappa-B activation. Plays a role in the regulation of DNA repair after double-stranded DNA breaks. Acts as a chromatin regulator via its association with the Polycomb group (PcG) multiprotein PRC1-like complex; may act by deubiquitinating components of the PRC1-like comple. Promotes cell proliferation by deubiquitinating phosphorylated E2F1x. This Rattus norvegicus (Rat) protein is Ubiquitin carboxyl-terminal hydrolase 11.